The chain runs to 459 residues: Cysteine--tRNA ligase (459 aa).

Cys28 contacts Zn(2+). The 'HIGH' region signature appears at 30-40 (VTVYDLCHFGH). Zn(2+)-binding residues include Cys209, His234, and Glu238. A 'KMSKS' region motif is present at residues 266 to 270 (KMSKS). Lys269 provides a ligand contact to ATP.

It belongs to the class-I aminoacyl-tRNA synthetase family. Monomer. Zn(2+) is required as a cofactor.

It localises to the cytoplasm. It catalyses the reaction tRNA(Cys) + L-cysteine + ATP = L-cysteinyl-tRNA(Cys) + AMP + diphosphate. The protein is Cysteine--tRNA ligase of Actinobacillus succinogenes (strain ATCC 55618 / DSM 22257 / CCUG 43843 / 130Z).